Consider the following 343-residue polypeptide: MSAFTPASEVLLRHSDDFEQSRILFAGDLQDDLPARLDTAASRAHTQQFQHWQVLSRQMGDNARFSLVATADDVADCDTLIYYWPKNKPEAQFQLMNLLSLLPVGTDIFVVGENRSGVRSAEQMLADYAPLNKVDSARRCGLYFGRLEKQPVFDADKFWGEYSVDGLTVKTLPGVFSRDGLDVGSQLLLSTLTPHTKGKVLDVGCGAGVLSVAFARHSPKIRLTLCDVSAPAVEASRATLAANGVEGEVFASNVFSEVKGRFDMIISNPPFHDGMQTSLDAAQTLIRGAVRHLNSGGELRIVANAFLPYPDVLDETFGFHEVIAQTGRFKVYRAIMTRQAKKG.

This sequence belongs to the methyltransferase superfamily. RsmC family. Monomer.

It localises to the cytoplasm. It catalyses the reaction guanosine(1207) in 16S rRNA + S-adenosyl-L-methionine = N(2)-methylguanosine(1207) in 16S rRNA + S-adenosyl-L-homocysteine + H(+). Functionally, specifically methylates the guanine in position 1207 of 16S rRNA in the 30S particle. The sequence is that of Ribosomal RNA small subunit methyltransferase C from Escherichia coli O157:H7.